Here is a 409-residue protein sequence, read N- to C-terminus: Failed axon connections homolog (409 aa).

The helical transmembrane segment at 68-88 (YLTGGALLAAAAYLLHELLVI) threads the bilayer. Residues 372–393 (DEGAENSFSRTPDTDFTGHSLF) are disordered.

This sequence belongs to the FAX family.

Its subcellular location is the membrane. In terms of biological role, may play a role in axonal development. The chain is Failed axon connections homolog (Faxc) from Mus musculus (Mouse).